We begin with the raw amino-acid sequence, 656 residues long: Phosphatidylinositol 4,5-bisphosphate-binding protein SLM2 (656 aa).

In terms of domain architecture, PH spans 445-555; the sequence is FEVKSGFLEK…WFGNIKALSS (111 aa). Residues 577–605 form a disordered region; that stretch reads AKSNENTTESVTPQVTNEQHTRYDDVSSS. Polar residues predominate over residues 580–594; sequence NENTTESVTPQVTNE. Ser-626 is modified (phosphoserine). Positions 640-645 match the PXIXIT-like, required for interaction with CNA1 and CNA2, and calcineurin-dependent dephosphorylation motif; it reads PEFYIE. A phosphoserine mark is found at Ser-649 and Ser-653.

As to quaternary structure, heterodimer of SLM1-SLM2. Binds phosphatidylinositol 4,5-bisphosphate, which is required for function. Interacts with the TORC2 subunits AVO2, BIT61 and TOR2. Interacts with the calcineurin catalytic subunits CNA1 and CNA2.

Its subcellular location is the cell membrane. In terms of biological role, together with SLM1, effector of the TORC2- and calcineurin-signaling pathways. Phosphorylated and activated by TORC2 under favorable growth conditions. Mediates actin polarization via inhibition of calcineurin-dependent transcription. Upon nutrient limitation or environmental stress, gets dephosphorylated by calcineurin, inhibiting interaction with TORC2, thereby antagonizing TORC2 signaling and mediating calcineurin-dependent actin depolarization. Also functions in heat-induced, calcineurin-mediated uracil permease (FUR4) endocytosis. The chain is Phosphatidylinositol 4,5-bisphosphate-binding protein SLM2 (SLM2) from Saccharomyces cerevisiae (strain ATCC 204508 / S288c) (Baker's yeast).